The following is a 20-amino-acid chain: Putative antimicrobial protein 2 (20 aa).

A disordered region spans residues 1-20; sequence DLPECCSATELELDSGKQTS.

Its function is as follows. May have antimicrobial activity. This chain is Putative antimicrobial protein 2, found in Cenchritis muricatus (Beaded periwinkle).